The chain runs to 1374 residues: Sterol 3-beta-glucosyltransferase (1374 aa).

Over residues 1-14 the composition is skewed to basic and acidic residues; sequence MRPLRDDAKRRADR. 3 disordered regions span residues 1-60, 83-190, and 206-227; these read MRPL…RDGN, ARFD…PRAA, and TSAT…QPQS. Over residues 16-28 the composition is skewed to polar residues; it reads LSASMKPTSSNRP. The segment covering 29–41 has biased composition (basic and acidic residues); sequence FSDRVPDRFKDGD. Residues 101 to 112 are compositionally biased toward polar residues; that stretch reads VEQTTGKASSRT. A compositionally biased stretch (basic and acidic residues) spans 125-138; that stretch reads KRSEPSKLVLEERG. The 50-residue stretch at 234–283 folds into the GRAM 1 domain; it reads MRLMKMFEFAKPEKVLVEYACSLLQSMLLQGYMYVTEGHICFYAYLPKKS. In terms of domain architecture, PH spans 285-382; it reads VAIKSGYLSK…WVKALQQVIF (98 aa). The disordered stretch occupies residues 458–538; sequence ATKEAQDQHD…SMTDTTESAS (81 aa). 2 stretches are compositionally biased toward basic and acidic residues: residues 461 to 473 and 490 to 499; these read EAQD…HQPE and SDQRREDSPR. The segment covering 503-538 has biased composition (polar residues); it reads SSVGNENQGSADSFAEQGTGSSPIIQSMTDTTESAS. The GRAM 2 domain maps to 704-770; the sequence is DRFRAHFALP…KDIENVEKEK (67 aa). 10 residues coordinate UDP-alpha-D-glucose: serine 893, arginine 894, aspartate 896, alanine 1196, histidine 1198, histidine 1211, glycine 1215, threonine 1216, aspartate 1235, and glutamine 1236. Residues 1314–1325 show a composition bias toward polar residues; sequence ASSTPFSPTPTA. Positions 1314-1338 are disordered; the sequence is ASSTPFSPTPTAKASPDGGDDDLDD.

This sequence belongs to the glycosyltransferase 28 family.

It is found in the cytoplasm. The protein localises to the preautophagosomal structure membrane. It carries out the reaction a sterol + UDP-alpha-D-glucose = a sterol 3-beta-D-glucoside + UDP + H(+). It catalyses the reaction ergosterol + UDP-alpha-D-glucose = ergosteryl 3-beta-D-glucoside + UDP + H(+). Sterol glycosyltransferase responsible for the glycosylation of ergosterol to form ergosterol-glucoside. The chain is Sterol 3-beta-glucosyltransferase from Penicillium rubens (strain ATCC 28089 / DSM 1075 / NRRL 1951 / Wisconsin 54-1255) (Penicillium chrysogenum).